Here is a 177-residue protein sequence, read N- to C-terminus: Inorganic pyrophosphatase (177 aa).

Lys-30, Arg-44, and Tyr-56 together coordinate substrate. Mg(2+)-binding residues include Asp-66, Asp-71, and Asp-103. Tyr-142 is a binding site for substrate.

Belongs to the PPase family. Homohexamer. The cofactor is Mg(2+).

Its subcellular location is the cytoplasm. The enzyme catalyses diphosphate + H2O = 2 phosphate + H(+). In terms of biological role, catalyzes the hydrolysis of inorganic pyrophosphate (PPi) forming two phosphate ions. The protein is Inorganic pyrophosphatase of Caulobacter vibrioides (strain ATCC 19089 / CIP 103742 / CB 15) (Caulobacter crescentus).